The primary structure comprises 526 residues: Berberine bridge enzyme-like 11 (526 aa).

Positions 1 to 21 (MEKLLIICMLLISVLVATSQS) are cleaved as a signal peptide. Cys-31 and Cys-94 are oxidised to a cystine. N-linked (GlcNAc...) asparagine glycosylation is found at Asn-52, Asn-136, Asn-273, and Asn-482. Positions 72 to 247 (TTPKPIAIIT…MGYKIRLVPV (176 aa)) constitute an FAD-binding PCMH-type domain. The 6-(S-cysteinyl)-8alpha-(pros-histidyl)-FAD (His-Cys) cross-link spans 109–171 (HDFEGLSYTS…NVLGFPAGLC (63 aa)).

This sequence belongs to the oxygen-dependent FAD-linked oxidoreductase family. FAD serves as cofactor. Post-translationally, the FAD cofactor is bound via a bicovalent 6-S-cysteinyl, 8alpha-N1-histidyl FAD linkage.

It localises to the secreted. Its subcellular location is the cell wall. This is Berberine bridge enzyme-like 11 from Arabidopsis thaliana (Mouse-ear cress).